A 658-amino-acid chain; its full sequence is DNA ligase (658 aa).

NAD(+) contacts are provided by residues 32–36 (DAVYD) and 81–82 (SL). The N6-AMP-lysine intermediate role is filled by lysine 112. NAD(+)-binding residues include arginine 133, glutamate 167, and lysine 306. 4 residues coordinate Zn(2+): cysteine 400, cysteine 403, cysteine 416, and cysteine 421. The BRCT domain occupies 577-658 (ESSSVFNNKT…LKRLKKLDQN (82 aa)).

The protein belongs to the NAD-dependent DNA ligase family. LigA subfamily. Requires Mg(2+) as cofactor. It depends on Mn(2+) as a cofactor.

It carries out the reaction NAD(+) + (deoxyribonucleotide)n-3'-hydroxyl + 5'-phospho-(deoxyribonucleotide)m = (deoxyribonucleotide)n+m + AMP + beta-nicotinamide D-nucleotide.. Functionally, DNA ligase that catalyzes the formation of phosphodiester linkages between 5'-phosphoryl and 3'-hydroxyl groups in double-stranded DNA using NAD as a coenzyme and as the energy source for the reaction. It is essential for DNA replication and repair of damaged DNA. The chain is DNA ligase from Helicobacter pylori (strain G27).